Here is a 74-residue protein sequence, read N- to C-terminus: Large ribosomal subunit protein uL30 (74 aa).

Belongs to the universal ribosomal protein uL30 family. As to quaternary structure, part of the 50S ribosomal subunit.

The sequence is that of Large ribosomal subunit protein uL30 from Micrococcus luteus (strain ATCC 4698 / DSM 20030 / JCM 1464 / CCM 169 / CCUG 5858 / IAM 1056 / NBRC 3333 / NCIMB 9278 / NCTC 2665 / VKM Ac-2230) (Micrococcus lysodeikticus).